The following is a 443-amino-acid chain: Type I restriction enzyme HindI methylase subunit (443 aa).

S-adenosyl-L-methionine is bound by residues 117-122 (QYFTPK), 146-148 (SGG), and Glu-173.

Belongs to the N(4)/N(6)-methyltransferase family. In terms of assembly, the type I restriction/modification system is composed of three polypeptides R, M and S; the restriction enzyme has stoichiometry R(2)M(2)S(1) while the methyltransferase is M(2)S(1).

The enzyme catalyses a 2'-deoxyadenosine in DNA + S-adenosyl-L-methionine = an N(6)-methyl-2'-deoxyadenosine in DNA + S-adenosyl-L-homocysteine + H(+). Its function is as follows. The subtype gamma methyltransferase (M) subunit of a type I restriction enzyme. The M and S subunits together form a methyltransferase (MTase) that methylates adenosines in the sequence 5'-RAACN(5)TAG-3'. Methylation protects against cleavage by HindI. In the presence of the R subunit the complex can also act as an endonuclease, binding to the same target sequence but cutting the DNA some distance from this site. Whether the DNA is cut or modified depends on the methylation state of the target sequence. When the target site is unmodified, the DNA is cut. When the target site is hemimethylated, the complex acts as a maintenance MTase modifying the DNA so that both strands become methylated. After locating a non-methylated recognition site, the enzyme complex serves as a molecular motor that translocates DNA in an ATP-dependent manner until a collision occurs that triggers cleavage. This Haemophilus influenzae (strain ATCC 51907 / DSM 11121 / KW20 / Rd) protein is Type I restriction enzyme HindI methylase subunit.